The primary structure comprises 152 residues: MSLVANEEFQHILRVLNTNVDGKQKIMFALTSIKGIGRRLANIVCKKADVDMNKRAGELSAAEIDNLMTIVANPRQFKIPDWFLNRQKDYKDGKYSQVVSNALDMKLRDDLERLKKIRNHRGLRHYWGLRVRGQHTKTTGRRGKTVGVSKKR.

N-acetylserine is present on Ser2.

Belongs to the universal ribosomal protein uS13 family.

It is found in the cytoplasm. In terms of biological role, located at the top of the head of the 40S subunit, it contacts several helices of the 18S rRNA. This chain is Small ribosomal subunit protein uS13z/uS13y/uS13x (RPS18A), found in Arabidopsis thaliana (Mouse-ear cress).